The sequence spans 749 residues: Homeobox-leucine zipper protein ROC7 (749 aa).

The disordered stretch occupies residues 26–98 (LDQHQQHQHQ…KKRYHRHTQH (73 aa)). The span at 46–57 (SDGRAPRDELEM) shows a compositional bias: basic and acidic residues. Gly residues predominate over residues 68-78 (SGGGGGGGGSG). A compositionally biased stretch (basic residues) spans 86-97 (RPRKKRYHRHTQ). A DNA-binding region (homeobox) is located at residues 88-147 (RKKRYHRHTQHQIQELEAFFKECPHPDDKQRKELSRELGLEPLQVKFWFQNKRTQMKTQH). A coiled-coil region spans residues 137-218 (QNKRTQMKTQ…DRISAIAAKY (82 aa)). One can recognise an START domain in the interval 256–494 (ADFDKPLVIE…LERQCERLAS (239 aa)).

The protein belongs to the HD-ZIP homeobox family. Class IV subfamily.

It is found in the nucleus. Functionally, probable transcription factor. In Oryza sativa subsp. indica (Rice), this protein is Homeobox-leucine zipper protein ROC7 (ROC7).